The following is a 228-amino-acid chain: Odorant-binding protein 47 (228 aa).

6 disulfides stabilise this stretch: C60-C225, C73-C215, C74-C204, C88-C114, C110-C185, and C158-C195. N117 is a glycosylation site (N-linked (GlcNAc...) asparagine).

This sequence belongs to the PBP/GOBP family. Glycosylated. Head without antennae (at protein level).

It localises to the secreted. Present in the aqueous fluid surrounding olfactory sensory dendrites and are thought to aid in the capture and transport of hydrophobic odorants into and through this fluid. Binds N-phenyl-1-naphthylamine, menthol, citronellal, 1-dodecanol, decanal, p-tert-butylbenzophenone, 4-hydroxy-4'-isopropylazobenzene, 2-pyrrolyl-p-methyl-azobenzene and indole. Expressed in mosquito head but barely detectable in antennae, which suggests that it may be present in mouth structures, such as palpi and proboscis, and may have a function in taste. This is Odorant-binding protein 47 from Anopheles gambiae (African malaria mosquito).